We begin with the raw amino-acid sequence, 352 residues long: DNA polymerase IV (352 aa).

Positions 4–185 constitute a UmuC domain; that stretch reads IIHVDMDCFF…LPLSKIPGVG (182 aa). The Mg(2+) site is built by aspartate 8 and aspartate 103. Glutamate 104 is a catalytic residue.

This sequence belongs to the DNA polymerase type-Y family. As to quaternary structure, monomer. The cofactor is Mg(2+).

The protein localises to the cytoplasm. It carries out the reaction DNA(n) + a 2'-deoxyribonucleoside 5'-triphosphate = DNA(n+1) + diphosphate. Poorly processive, error-prone DNA polymerase involved in untargeted mutagenesis. Copies undamaged DNA at stalled replication forks, which arise in vivo from mismatched or misaligned primer ends. These misaligned primers can be extended by PolIV. Exhibits no 3'-5' exonuclease (proofreading) activity. May be involved in translesional synthesis, in conjunction with the beta clamp from PolIII. In Enterobacter sp. (strain 638), this protein is DNA polymerase IV.